A 540-amino-acid chain; its full sequence is SNW/SKI-interacting protein B (540 aa).

Disordered regions lie at residues M1–V106, G215–G273, G351–D402, and A502–H526. 2 stretches are compositionally biased toward basic and acidic residues: residues P16–Y29 and M83–Q94. Residues P189 to A353 form an SNW region. Positions A236 to P251 are enriched in pro residues. The span at E359–A382 shows a compositional bias: basic and acidic residues. Residues R383–S393 show a composition bias toward low complexity.

The protein belongs to the SNW family.

Its subcellular location is the nucleus. The chain is SNW/SKI-interacting protein B from Oryza sativa subsp. japonica (Rice).